Here is a 171-residue protein sequence, read N- to C-terminus: MPGIAEESIAERTRRVLEPVLARDGYELVEVEWLRQGSRWTLRLFVDKPGGVGIEDCQAVSRLVDPILDVEDFIEPAYDLEVSSPGLDRPLRKPADFDRYAGQRAHVKAYGPVAGTAPGSPARKNWTGVLVGYRDGAVEIDVDGVVHRVPHDQIAKAHLEYDFEADLRRKD.

It belongs to the RimP family.

Its subcellular location is the cytoplasm. Its function is as follows. Required for maturation of 30S ribosomal subunits. This chain is Ribosome maturation factor RimP, found in Anaeromyxobacter sp. (strain Fw109-5).